A 399-amino-acid chain; its full sequence is Phosphoglycerate kinase (399 aa).

Substrate-binding positions include 22-24 (DFN), arginine 38, 61-64 (HLGR), arginine 120, and arginine 153. ATP is bound by residues lysine 204, glutamate 326, and 352 to 355 (GGDT).

It belongs to the phosphoglycerate kinase family. As to quaternary structure, monomer.

It is found in the cytoplasm. The enzyme catalyses (2R)-3-phosphoglycerate + ATP = (2R)-3-phospho-glyceroyl phosphate + ADP. Its pathway is carbohydrate degradation; glycolysis; pyruvate from D-glyceraldehyde 3-phosphate: step 2/5. This Geobacter sp. (strain M21) protein is Phosphoglycerate kinase.